A 475-amino-acid polypeptide reads, in one-letter code: Dynein regulatory complex subunit 4 (475 aa).

Residues 1–22 (MPPKRKSSPKGKTPTVVDGLST) form a disordered region. The interval 1–113 (MPPKRKSSPK…LLYEQQNMLS (113 aa)) is regulates microtubule-binding. Coiled coils occupy residues 20-104 (LSTE…VKHL), 142-200 (RSLK…QEEE), and 242-426 (KNLD…VARV). The interval 114 to 257 (ELKAESIIST…TSLKEELKEM (144 aa)) is microtubule-binding.

This sequence belongs to the DRC4 family. Component of the nexin-dynein regulatory complex (N-DRC). Interacts with microtubules.

The protein resides in the cytoplasm. It localises to the cytoskeleton. It is found in the cell projection. The protein localises to the cilium. Its subcellular location is the flagellum. The protein resides in the cilium axoneme. It localises to the cilium basal body. It is found in the golgi apparatus. The protein localises to the flagellum axoneme. Component of the nexin-dynein regulatory complex (N-DRC), a key regulator of ciliary/flagellar motility which maintains the alignment and integrity of the distal axoneme and regulates microtubule sliding in motile axonemes. Plays an important role in the assembly of the N-DRC linker. Plays dual roles at both the primary (or non-motile) cilia to regulate hedgehog signaling and in motile cilia to coordinate cilia movement. Required for proper slow muscle development and positively regulates ciliary smoothened (SMO)-dependent Hedgehog (Hh) signaling pathway. Required for tether cilia motility which is essential for normal otolith formation and localization in the developing inner ear. The polypeptide is Dynein regulatory complex subunit 4 (gas8) (Danio rerio (Zebrafish)).